Consider the following 517-residue polypeptide: Protein disulfide-isomerase A5 (517 aa).

An N-terminal signal peptide occupies residues 1 to 21 (MARAWGLLLAIGVILPTWLSS). Intrachain disulfides connect Cys83–Cys92, Cys180–Cys183, Cys303–Cys306, and Cys424–Cys427. Thioredoxin domains lie at 132–259 (FLKD…NPQP), 268–382 (PWAD…NPEA), and 376–504 (WMQN…TLRE). Residues 514–517 (REDL) carry the Prevents secretion from ER motif.

The protein belongs to the protein disulfide isomerase family.

The protein resides in the endoplasmic reticulum lumen. The catalysed reaction is Catalyzes the rearrangement of -S-S- bonds in proteins.. This chain is Protein disulfide-isomerase A5 (Pdia5), found in Rattus norvegicus (Rat).